The primary structure comprises 1087 residues: Exportin-7-A (1087 aa).

An Importin N-terminal domain is found at 30 to 96 (AEKALVEFTN…RNYVLTYLAT (67 aa)).

The protein belongs to the exportin family. Expressed in oocytes (at protein level).

Its subcellular location is the cytoplasm. It localises to the nucleus. Mediates the nuclear export of proteins (cargos) with broad substrate specificity. The chain is Exportin-7-A (xpo7-a) from Xenopus laevis (African clawed frog).